We begin with the raw amino-acid sequence, 314 residues long: MPIKIPDRLPATDILRSENIFVMSEARAATQGIRPLKVLLLNLMPKKIETETQFLRLLSNSPLQVDVELLRIDNRPTKNTPTEHLDTFYRQFEMVKDRNFDGLIVTGAPLGLVQFEDVLYWEEIQVIMNWAKEHVTSTMFVCWAAQAGLKLLYDLPKRTRKEKISGVYEHKIHDRHHPLLRGFDDLFKAPHSRYADFSPSYLAEHTDLDILATSEVAGVYLASTKDKRNVFVTGHPEYEVDTLHHEYIRDCEQGIEPNMPVNYYPDNNASNTPVASWRSHGHLLFSNWLNYCVYQQTPYDLDDFSEANFTKNDE.

The active-site Acyl-thioester intermediate is the cysteine 142. Lysine 163 and serine 192 together coordinate substrate. Catalysis depends on histidine 235, which acts as the Proton acceptor. The active site involves glutamate 237. Arginine 249 is a substrate binding site.

The protein belongs to the MetA family.

The protein resides in the cytoplasm. It catalyses the reaction L-homoserine + succinyl-CoA = O-succinyl-L-homoserine + CoA. Its pathway is amino-acid biosynthesis; L-methionine biosynthesis via de novo pathway; O-succinyl-L-homoserine from L-homoserine: step 1/1. Its function is as follows. Transfers a succinyl group from succinyl-CoA to L-homoserine, forming succinyl-L-homoserine. The chain is Homoserine O-succinyltransferase from Photobacterium profundum (strain SS9).